A 273-amino-acid polypeptide reads, in one-letter code: Probable ribosomal RNA small subunit methyltransferase A (273 aa).

6 residues coordinate S-adenosyl-L-methionine: N26, L28, G53, E74, D98, and N113.

This sequence belongs to the class I-like SAM-binding methyltransferase superfamily. rRNA adenine N(6)-methyltransferase family. RsmA subfamily.

It localises to the cytoplasm. Functionally, specifically dimethylates two adjacent adenosines in the loop of a conserved hairpin near the 3'-end of 16S rRNA in the 30S particle. May play a critical role in biogenesis of 30S subunits. The protein is Probable ribosomal RNA small subunit methyltransferase A of Methanothermobacter thermautotrophicus (strain ATCC 29096 / DSM 1053 / JCM 10044 / NBRC 100330 / Delta H) (Methanobacterium thermoautotrophicum).